A 221-amino-acid chain; its full sequence is Probable septum site-determining protein MinC (221 aa).

The protein belongs to the MinC family. Interacts with MinD and FtsZ.

In terms of biological role, cell division inhibitor that blocks the formation of polar Z ring septums. Rapidly oscillates between the poles of the cell to destabilize FtsZ filaments that have formed before they mature into polar Z rings. Prevents FtsZ polymerization. This chain is Probable septum site-determining protein MinC, found in Shewanella oneidensis (strain ATCC 700550 / JCM 31522 / CIP 106686 / LMG 19005 / NCIMB 14063 / MR-1).